The primary structure comprises 95 residues: Large ribosomal subunit protein eL31 (95 aa).

This sequence belongs to the eukaryotic ribosomal protein eL31 family.

The sequence is that of Large ribosomal subunit protein eL31 (rpl31e) from Pyrococcus horikoshii (strain ATCC 700860 / DSM 12428 / JCM 9974 / NBRC 100139 / OT-3).